The sequence spans 218 residues: Cytochrome b6 (218 aa).

The helical transmembrane segment at 35–55 threads the bilayer; the sequence is IFYCLGGITLVCFLIQFATGF. Position 38 (Cys-38) interacts with heme c. The heme b site is built by His-89 and His-103. Helical transmembrane passes span 93–113, 119–139, and 189–209; these read ASMM…TGGF, LTWV…VTGY, and LHTF…FLMI. Residues His-190 and His-205 each contribute to the heme b site.

The protein belongs to the cytochrome b family. PetB subfamily. As to quaternary structure, the 4 large subunits of the cytochrome b6-f complex are cytochrome b6, subunit IV (17 kDa polypeptide, PetD), cytochrome f and the Rieske protein, while the 4 small subunits are PetG, PetL, PetM and PetN. The complex functions as a dimer. The cofactor is heme b. Requires heme c as cofactor.

Its subcellular location is the cellular thylakoid membrane. In terms of biological role, component of the cytochrome b6-f complex, which mediates electron transfer between photosystem II (PSII) and photosystem I (PSI), cyclic electron flow around PSI, and state transitions. In Synechococcus sp. (strain CC9902), this protein is Cytochrome b6.